We begin with the raw amino-acid sequence, 177 residues long: Peptide methionine sulfoxide reductase MsrA (177 aa).

Residue C15 is part of the active site.

Belongs to the MsrA Met sulfoxide reductase family.

The catalysed reaction is L-methionyl-[protein] + [thioredoxin]-disulfide + H2O = L-methionyl-(S)-S-oxide-[protein] + [thioredoxin]-dithiol. It catalyses the reaction [thioredoxin]-disulfide + L-methionine + H2O = L-methionine (S)-S-oxide + [thioredoxin]-dithiol. Its function is as follows. Has an important function as a repair enzyme for proteins that have been inactivated by oxidation. Catalyzes the reversible oxidation-reduction of methionine sulfoxide in proteins to methionine. The polypeptide is Peptide methionine sulfoxide reductase MsrA (Listeria innocua serovar 6a (strain ATCC BAA-680 / CLIP 11262)).